Consider the following 311-residue polypeptide: Oxygen-dependent coproporphyrinogen-III oxidase (311 aa).

Ser-100 contacts substrate. Positions 104 and 114 each coordinate a divalent metal cation. The Proton donor role is filled by His-114. 116-118 serves as a coordination point for substrate; the sequence is NVR. A divalent metal cation-binding residues include His-153 and His-183. The segment at 248-283 is important for dimerization; it reads YAEFNLVYDRGTLFGLQSGGRTESILMSLPPIVHWE. 266-268 provides a ligand contact to substrate; sequence GGR.

The protein belongs to the aerobic coproporphyrinogen-III oxidase family. As to quaternary structure, homodimer. The cofactor is a divalent metal cation.

The protein localises to the cytoplasm. The enzyme catalyses coproporphyrinogen III + O2 + 2 H(+) = protoporphyrinogen IX + 2 CO2 + 2 H2O. It participates in porphyrin-containing compound metabolism; protoporphyrin-IX biosynthesis; protoporphyrinogen-IX from coproporphyrinogen-III (O2 route): step 1/1. Involved in the heme biosynthesis. Catalyzes the aerobic oxidative decarboxylation of propionate groups of rings A and B of coproporphyrinogen-III to yield the vinyl groups in protoporphyrinogen-IX. The chain is Oxygen-dependent coproporphyrinogen-III oxidase from Legionella pneumophila (strain Corby).